We begin with the raw amino-acid sequence, 311 residues long: Methionyl-tRNA formyltransferase (311 aa).

Position 110 to 113 (110 to 113 (SLLP)) interacts with (6S)-5,6,7,8-tetrahydrofolate.

The protein belongs to the Fmt family.

The enzyme catalyses L-methionyl-tRNA(fMet) + (6R)-10-formyltetrahydrofolate = N-formyl-L-methionyl-tRNA(fMet) + (6S)-5,6,7,8-tetrahydrofolate + H(+). Attaches a formyl group to the free amino group of methionyl-tRNA(fMet). The formyl group appears to play a dual role in the initiator identity of N-formylmethionyl-tRNA by promoting its recognition by IF2 and preventing the misappropriation of this tRNA by the elongation apparatus. In Streptococcus gordonii (strain Challis / ATCC 35105 / BCRC 15272 / CH1 / DL1 / V288), this protein is Methionyl-tRNA formyltransferase.